The chain runs to 629 residues: Transferrin (629 aa).

The first 21 residues, 1-21, serve as a signal peptide directing secretion; the sequence is MTIKNVLKLAALLGVLALVQA. 2 Transferrin-like domains span residues 26-366 and 372-621; these read YRMC…ERDG and MKMC…GLKC. 2 cysteine pairs are disulfide-bonded: C29-C63 and C38-C54. Y111 contributes to the Fe(3+) binding site. 6 cysteine pairs are disulfide-bonded: C135–C231, C184–C210, C207–C216, C270–C283, C375–C409, and C385–C403. Hydrogencarbonate-binding residues include T137, R141, V143, and G144. Residue Y225 participates in Fe(3+) binding. D408 and H561 together coordinate Fe(3+).

Belongs to the transferrin family. As to quaternary structure, monomer.

Transferrins are iron binding transport proteins which bind Fe(3+) ion in association with the binding of an anion, usually bicarbonate. This transferrin binds only one Fe(3+) ion per protein molecule. Transports iron ions from the hemolymph into the eggs during the vitellogenic stage (oogenesis). This is Transferrin from Sarcophaga peregrina (Flesh fly).